A 404-amino-acid chain; its full sequence is uncharacterized protein (404 aa).

Helical transmembrane passes span 35-55 and 92-112; these read ILFS…FTFL and EDIW…ISSI.

It is found in the membrane. This is an uncharacterized protein from Saccharomyces cerevisiae (strain ATCC 204508 / S288c) (Baker's yeast).